The following is a 224-amino-acid chain: Small ribosomal subunit protein eS1 (224 aa).

The protein belongs to the eukaryotic ribosomal protein eS1 family.

This is Small ribosomal subunit protein eS1 from Methanococcus maripaludis (strain C7 / ATCC BAA-1331).